The sequence spans 479 residues: tRNA modification GTPase MnmE (479 aa).

Residues arginine 25, glutamate 82, and lysine 134 each coordinate (6S)-5-formyl-5,6,7,8-tetrahydrofolate. The TrmE-type G domain maps to 230 to 401 (GLRVVIAGQP…LRAALLARAG (172 aa)). Asparagine 240 is a binding site for K(+). GTP-binding positions include 240–245 (NAGKSS), 259–265 (TPIPGTT), 284–287 (DTAG), 352–355 (NKAD), and 382–384 (SAR). Serine 244 lines the Mg(2+) pocket. K(+) is bound by residues threonine 259, isoleucine 261, and threonine 264. Residue threonine 265 participates in Mg(2+) binding. (6S)-5-formyl-5,6,7,8-tetrahydrofolate is bound at residue lysine 479.

It belongs to the TRAFAC class TrmE-Era-EngA-EngB-Septin-like GTPase superfamily. TrmE GTPase family. As to quaternary structure, homodimer. Heterotetramer of two MnmE and two MnmG subunits. The cofactor is K(+).

It is found in the cytoplasm. Its function is as follows. Exhibits a very high intrinsic GTPase hydrolysis rate. Involved in the addition of a carboxymethylaminomethyl (cmnm) group at the wobble position (U34) of certain tRNAs, forming tRNA-cmnm(5)s(2)U34. The sequence is that of tRNA modification GTPase MnmE from Leptothrix cholodnii (strain ATCC 51168 / LMG 8142 / SP-6) (Leptothrix discophora (strain SP-6)).